The sequence spans 172 residues: Lectin (172 aa).

Positions 1–20 are cleaved as a signal peptide; the sequence is MVWCLADLRAYVLVLLVISG. Positions 36–172 constitute a C-type lectin domain; the sequence is DCTPGWDCHF…ICKYTTPCRY (137 aa). Disulfide bonds link cysteine 65/cysteine 164 and cysteine 140/cysteine 156. N-linked (GlcNAc...) asparagine glycosylation is present at asparagine 93.

In terms of assembly, heterodimer. In terms of tissue distribution, anterior part of oviduct.

The protein resides in the secreted. In terms of biological role, may be involved in protection of eggs and embryos against microorganisms. Calcium-dependent lectin with specificity to D-glucose and D-glucosamine. Can agglutinate microorganisms in vivo. The chain is Lectin (LEC) from Pleurodeles waltl (Iberian ribbed newt).